Consider the following 247-residue polypeptide: Potassium channel Ftrac_2467 (247 aa).

The next 6 membrane-spanning stretches (helical) occupy residues 23-44, 56-78, 89-117, 142-165, 187-210, and 215-237; these read TRIETFSDAVFALAITLLVLSS, SMRDVIPFAICVALIIVIWYQHY, KVTILLNTILLFVLLVYVYPLKFLARFLS, LKLLMVNYGLGAFAIFLVFSLMYW, SIIANLLMCSVPLLSLIITLIDPW, and TTILSGFLYFLYVPIMIVFGRIT. Residues 24 to 30 carry the RxxxFSD motif motif; the sequence is RIETFSD.

Belongs to the TMEM175 family. Homotetramer.

It localises to the cell membrane. It carries out the reaction K(+)(in) = K(+)(out). Its function is as follows. Potassium channel; forms a potassium-permeable leak-like channel with weak selectivity for potassium. The channel is permeable for K(+), Rb(+) and Cs(+). The protein is Potassium channel Ftrac_2467 of Marivirga tractuosa (strain ATCC 23168 / DSM 4126 / NBRC 15989 / NCIMB 1408 / VKM B-1430 / H-43) (Microscilla tractuosa).